We begin with the raw amino-acid sequence, 646 residues long: Acetyl-coenzyme A synthetase (646 aa).

Residues 190-193 (RAGK) and T309 each bind CoA. Residues 385–387 (GEP), 409–414 (DTWWQT), D498, and R513 each bind ATP. S521 contacts CoA. R524 provides a ligand contact to ATP. Mg(2+)-binding residues include V535, H537, and V540. R582 provides a ligand contact to CoA. Position 607 is an N6-acetyllysine (K607).

Belongs to the ATP-dependent AMP-binding enzyme family. Mg(2+) is required as a cofactor. In terms of processing, acetylated. Deacetylation by the SIR2-homolog deacetylase activates the enzyme.

The catalysed reaction is acetate + ATP + CoA = acetyl-CoA + AMP + diphosphate. In terms of biological role, catalyzes the conversion of acetate into acetyl-CoA (AcCoA), an essential intermediate at the junction of anabolic and catabolic pathways. AcsA undergoes a two-step reaction. In the first half reaction, AcsA combines acetate with ATP to form acetyl-adenylate (AcAMP) intermediate. In the second half reaction, it can then transfer the acetyl group from AcAMP to the sulfhydryl group of CoA, forming the product AcCoA. This Pseudoalteromonas atlantica (strain T6c / ATCC BAA-1087) protein is Acetyl-coenzyme A synthetase.